The following is a 157-amino-acid chain: Ribosome maturation factor RimP (157 aa).

It belongs to the RimP family.

The protein resides in the cytoplasm. Its function is as follows. Required for maturation of 30S ribosomal subunits. The protein is Ribosome maturation factor RimP of Petrotoga mobilis (strain DSM 10674 / SJ95).